The sequence spans 439 residues: MNLLPTPESPVTRQEKMATVWDEAEQDGIGEEVLKMSTEEIVQRTRLLDSEIKIMKSEVLRVTHELQAMKDKIKENSEKIKVNKTLPYLVSNVIELLDVDPNDQEEDGANIDLDSQRKGKCAVIKTSTRQTYFLPVIGLVDAEKLKPGDLVGVNKDSYLILETLPTEYDSRVKAMEVDERPTEQYSDIGGLDKQIQELVEAIVLPMNHKEKFENLGIQPPKGVLMYGPPGTGKTLLARACAAQTKATFLKLAGPQLVQMFIGDGAKLVRDAFALAKEKAPSIIFIDELDAIGTKRFDSEKAGDREVQRTMLELLNQLDGFQPNTQVKVIAATNRVDILDPALLRSGRLDRKIEFPMPNEEARARIMQIHSRKMNVSPDVNYEELARCTDDFNGAQCKAVCVEAGMIALRRGATELTHEDYMEGILEVQAKKKANLQYYA.

An N-acetylmethionine modification is found at Met1. Ser9 bears the Phosphoserine mark. 227–234 (GPPGTGKT) lines the ATP pocket. At Ser376 the chain carries Phosphoserine.

Belongs to the AAA ATPase family. Component of the 19S proteasome regulatory particle complex. The 26S proteasome consists of a 20S core particle (CP) and two 19S regulatory subunits (RP). The regulatory particle is made of a lid composed of 9 subunits, a base containing 6 ATPases including PSMC3 and few additional components. Interacts with PAAF1.

It localises to the cytoplasm. The protein resides in the nucleus. Component of the 26S proteasome, a multiprotein complex involved in the ATP-dependent degradation of ubiquitinated proteins. This complex plays a key role in the maintenance of protein homeostasis by removing misfolded or damaged proteins, which could impair cellular functions, and by removing proteins whose functions are no longer required. Therefore, the proteasome participates in numerous cellular processes, including cell cycle progression, apoptosis, or DNA damage repair. PSMC3 belongs to the heterohexameric ring of AAA (ATPases associated with diverse cellular activities) proteins that unfolds ubiquitinated target proteins that are concurrently translocated into a proteolytic chamber and degraded into peptides. This Rattus norvegicus (Rat) protein is 26S proteasome regulatory subunit 6A (Psmc3).